Consider the following 149-residue polypeptide: MHCPFCSAVDTKVIDSRLVGEGSQVRRRRQCLVCHERFTTFEVAELVMPRVIKSNEVREPFNEDKLRSGMLKALEKRPVSSDDVEMALNHIKSHLRATGEREVTTKMVGNLVMEALRKLDKVAYIRFASVYRSFEDIREFGEEIARLQD.

The segment at cysteine 3–cysteine 34 is a zinc-finger region. The ATP-cone domain occupies proline 49–glutamate 139.

This sequence belongs to the NrdR family. Requires Zn(2+) as cofactor.

Functionally, negatively regulates transcription of bacterial ribonucleotide reductase nrd genes and operons by binding to NrdR-boxes. The protein is Transcriptional repressor NrdR of Pectobacterium carotovorum subsp. carotovorum (strain PC1).